Reading from the N-terminus, the 467-residue chain is Asparagine--tRNA ligase (467 aa).

Belongs to the class-II aminoacyl-tRNA synthetase family. As to quaternary structure, homodimer.

The protein resides in the cytoplasm. The enzyme catalyses tRNA(Asn) + L-asparagine + ATP = L-asparaginyl-tRNA(Asn) + AMP + diphosphate + H(+). This is Asparagine--tRNA ligase from Bacteroides fragilis (strain YCH46).